The following is a 331-amino-acid chain: 4-hydroxythreonine-4-phosphate dehydrogenase (331 aa).

Residues His137 and Thr138 each contribute to the substrate site. Positions 167, 212, and 267 each coordinate a divalent metal cation. Substrate-binding residues include Lys275, Asn284, and Arg293.

Belongs to the PdxA family. Homodimer. Requires Zn(2+) as cofactor. It depends on Mg(2+) as a cofactor. Co(2+) is required as a cofactor.

The protein localises to the cytoplasm. It catalyses the reaction 4-(phosphooxy)-L-threonine + NAD(+) = 3-amino-2-oxopropyl phosphate + CO2 + NADH. Its pathway is cofactor biosynthesis; pyridoxine 5'-phosphate biosynthesis; pyridoxine 5'-phosphate from D-erythrose 4-phosphate: step 4/5. In terms of biological role, catalyzes the NAD(P)-dependent oxidation of 4-(phosphooxy)-L-threonine (HTP) into 2-amino-3-oxo-4-(phosphooxy)butyric acid which spontaneously decarboxylates to form 3-amino-2-oxopropyl phosphate (AHAP). The sequence is that of 4-hydroxythreonine-4-phosphate dehydrogenase from Yersinia pestis bv. Antiqua (strain Angola).